Consider the following 208-residue polypeptide: MVPGSCSSFGLLVILSFQNVPDVGGFPNVPLFSLFTNAVNRAQHLHMLAADIYKDYERTYITDDVRRSSKNSQVVSCYSENIPAPTDKDNTHLKSDMDLLRFSLTLIQSWLNPVQALHRLFRNSDVYERLKYLEEGIQSLIRELEDGNLRSYSFMRTPYERLDINMRTDDGLLKVYGLLSCFKKDMHKVETYMKVIKCRHFAESKCVI.

The signal sequence occupies residues 1–25 (MVPGSCSSFGLLVILSFQNVPDVGG). Residue histidine 44 participates in Zn(2+) binding. Residues cysteine 77 and cysteine 181 are joined by a disulfide bond. Residue glutamate 190 participates in Zn(2+) binding. An intrachain disulfide couples cysteine 198 to cysteine 206.

The protein belongs to the somatotropin/prolactin family.

Its subcellular location is the secreted. Functionally, growth hormone plays an important role in growth control. This Xenopus laevis (African clawed frog) protein is Somatotropin-B (gh-b).